We begin with the raw amino-acid sequence, 329 residues long: GTPase Obg (329 aa).

The Obg domain maps to 1 to 159; it reads MQFIDQARIT…WFLQLELKLL (159 aa). The 169-residue stretch at 160-328 folds into the OBG-type G domain; that stretch reads AEVGIIGLPN…LLAQVWKELG (169 aa). Residues 166–173, 191–195, 213–216, 280–283, and 309–311 contribute to the ATP site; these read GLPNAGKS, FTTLV, DIPG, NKQE, and SAA. Mg(2+) contacts are provided by serine 173 and threonine 193.

This sequence belongs to the TRAFAC class OBG-HflX-like GTPase superfamily. OBG GTPase family. In terms of assembly, monomer. The cofactor is Mg(2+).

Its subcellular location is the cytoplasm. In terms of biological role, an essential GTPase which binds GTP, GDP and possibly (p)ppGpp with moderate affinity, with high nucleotide exchange rates and a fairly low GTP hydrolysis rate. Plays a role in control of the cell cycle, stress response, ribosome biogenesis and in those bacteria that undergo differentiation, in morphogenesis control. This chain is GTPase Obg, found in Prochlorococcus marinus (strain MIT 9313).